Reading from the N-terminus, the 385-residue chain is MQDVEEFRAQVRGWLADNLAGEFAALKGLGGPGREHEAFEERRAWNQRLAAAGLTCLGWPEEHGGRGLSTAHRVAFYEEYARADAPDKVNHFGEELLGPTLIAFGTPQQQRRFLPRIRDVTELWCQGYSEPGAGSDLASVATTAELDGDQWVINGQKVWTSLAHLSQWCFVLARTEKGSQRHAGLSYLLVPLDQPGVQIRPIVQITGTAEFNEVFFDDARTDADLVVGAPGDGWRVAMATLTFERGVSTLGQQIVYARELSNLVELARRTAAADDPLIRERLTRAWTGLRAMRSYALATMEGPAVEQPGQDNVSKLLWANWHRNLGELAMDVIGKPGMTMPDGEFDEWQRLYLFTRADTIYGGSNEIQRNIIAERVLGLPREAKG.

Residues 126–129 and Ser-161 contribute to the FAD site; that span reads QGYS. Glu-244 acts as the Proton acceptor in catalysis. FAD is bound at residue 364–366; it reads SNE.

This sequence belongs to the acyl-CoA dehydrogenase family. As to quaternary structure, heterotetramer composed of 2 IpdE1 subunits and 2 IpdE2 subunits. FAD is required as a cofactor.

The enzyme catalyses 3-[(3aS,4S,5R,7aS)-5-hydroxy-7a-methyl-1-oxo-octahydro-1H-inden-4-yl]propanoyl-CoA + A = (2E)-3-[(3aS,4S,5R,7aS)-5-hydroxy-7a-methyl-1-oxo-octahydro-1H-inden-4-yl]prop-2-enoyl-CoA + AH2. It functions in the pathway steroid metabolism; cholesterol degradation. Involved in cholesterol degradation. Catalyzes the dehydrogenation of 5OH-HIP-CoA to 5OH-HIPE-CoA. Can also use octanoyl-CoA and dihydroferuloyl-CoA, with lower efficiency. Cannot use 3-oxo-4-pregnene-20-carboxyl-CoA (3-OPC-CoA). This is Acyl-CoA dehydrogenase IpdE1 from Mycobacterium tuberculosis (strain ATCC 25618 / H37Rv).